The following is a 212-amino-acid chain: Thymidylate kinase (212 aa).

Position 11–18 (11–18 (GGEGVGKS)) interacts with ATP.

The protein belongs to the thymidylate kinase family.

It carries out the reaction dTMP + ATP = dTDP + ADP. Its function is as follows. Phosphorylation of dTMP to form dTDP in both de novo and salvage pathways of dTTP synthesis. This chain is Thymidylate kinase, found in Chromohalobacter salexigens (strain ATCC BAA-138 / DSM 3043 / CIP 106854 / NCIMB 13768 / 1H11).